Here is a 146-residue protein sequence, read N- to C-terminus: Inclusion membrane protein D (146 aa).

Helical transmembrane passes span 38 to 58 (AAVA…GLLF) and 68 to 88 (VVAA…ALVG).

The protein resides in the secreted. It is found in the host vacuole. Its subcellular location is the host pathogen-containing vacuole. It localises to the host pathogen-containing vacuole membrane. In terms of biological role, host inclusion membrane protein probably involved in early modification events of the chlamydial inclusion. The sequence is that of Inclusion membrane protein D from Chlamydia trachomatis serovar L2 (strain ATCC VR-902B / DSM 19102 / 434/Bu).